The primary structure comprises 283 residues: MSLDNTWFTEIHQDTAFSLRMKEKLHEEQTPFQKIEIYETEGFGTLMVIDGCVMLTDRDNFIYHEMMSHPVLYSHSDPKNVLIIGGGDCGTLREVLKHPEVKSATQVDIDERVTRLAEKYFPELCDSNDDPRAKLLFDDGIKYVQDAAPGSLDVIIIDSTDPVGPAEGLFSTAFYRDCIKALGPGGLLVQQSESPLLHTDSIIKPMHDSLRAAGFLDTLALHFPQCSYPSGWWTATMACKDMPVTFLREAQAEDKPFETHYYNAAIQRAAIACPEFFRKKLYG.

The region spanning 5–240 is the PABS domain; that stretch reads NTWFTEIHQD…GWWTATMACK (236 aa). Gln33 serves as a coordination point for S-methyl-5'-thioadenosine. 2 residues coordinate spermidine: His64 and Asp88. S-methyl-5'-thioadenosine contacts are provided by residues Asp108 and 139–140; that span reads DG. The active-site Proton acceptor is the Asp158. Spermidine is bound at residue 158 to 161; it reads DSTD. Pro165 contributes to the S-methyl-5'-thioadenosine binding site.

Belongs to the spermidine/spermine synthase family. Homodimer or homotetramer.

It localises to the cytoplasm. The catalysed reaction is S-adenosyl 3-(methylsulfanyl)propylamine + putrescine = S-methyl-5'-thioadenosine + spermidine + H(+). It functions in the pathway amine and polyamine biosynthesis; spermidine biosynthesis; spermidine from putrescine: step 1/1. In terms of biological role, catalyzes the irreversible transfer of a propylamine group from the amino donor S-adenosylmethioninamine (decarboxy-AdoMet) to putrescine (1,4-diaminobutane) to yield spermidine. This Thioalkalivibrio sulfidiphilus (strain HL-EbGR7) protein is Polyamine aminopropyltransferase.